The primary structure comprises 241 residues: Linker for activation of T-cells family member 1 (241 aa).

Residues 1-4 lie on the Extracellular side of the membrane; sequence MEAD. The helical; Signal-anchor for type III membrane protein transmembrane segment at 5–28 threads the bilayer; the sequence is ALSPVELGLLLLPFVVMLLAALCV. Residues Cys27 and Cys30 are each lipidated (S-palmitoyl cysteine). At 29–241 the chain is on the cytoplasmic side; that stretch reads RCRELPASYD…PDYENLQELN (213 aa). Residues Ser41, Ser44, Ser87, Ser104, Ser109, and Ser112 each carry the phosphoserine modification. The tract at residues 78–139 is disordered; it reads QPDLLPIPRS…DDYPEGYLVV (62 aa). A compositionally biased stretch (polar residues) spans 97–115; it reads MPSSRQNSDDANSVASYEN. Over residues 124–133 the composition is skewed to acidic residues; it reads DEDEDEDDYP. Residues 136 to 139 form an interaction with PLCG1 region; that stretch reads YLVV. Tyr175 is modified (phosphotyrosine). Interaction with GRB2, GRAP2 and PIK3R1 stretches follow at residues 175-178 and 195-198; these read YVNV. A phosphoserine mark is found at Ser199, Ser212, and Ser215. A disordered region spans residues 209 to 241; sequence ELASVTSQEVEDEEEEDVDGEEAPDYENLQELN. Acidic residues predominate over residues 217 to 233; that stretch reads EVEDEEEEDVDGEEAPD. A Phosphotyrosine modification is found at Tyr234.

In terms of assembly, when phosphorylated, interacts directly with the PIK3R1 subunit of phosphoinositide 3-kinase and the SH2 domains of GRB2, GRAP, GRAP2, PLCG1 and PLCG2. Interacts indirectly with CBL, SOS, VAV, and LCP2. Interacts with SHB, SKAP2 and CLNK. Interacts with FCGR1A. Interacts with GRB2, PLCG1 and THEMIS upon TCR activation in thymocytes. Interacts with THEMIS2. Post-translationally, phosphorylated on tyrosines by ZAP70 upon TCR activation, or by SYK upon other immunoreceptor activation; which leads to the recruitment of multiple signaling molecules. Is one of the most prominently tyrosine-phosphorylated proteins detected following TCR engagement. May be dephosphorylated by PTPRJ. In terms of processing, palmitoylation of Cys-27 and Cys-30 is required for raft targeting and efficient phosphorylation. Phosphorylated on tyrosines by ZAP70 upon TCR activation, or by SYK upon other immunoreceptor activation; which leads to the recruitment of multiple signaling molecules. Is one of the most prominently tyrosine-phosphorylated proteins detected following TCR engagement. May be dephosphorylated by PTPRJ. Phosphorylated by ITK leading to the recruitment of VAV1 to LAT-containing complexes. Post-translationally, 'Lys-63'-linked ubiquitinated by TRAF6. Expressed in NK cells. Present in lymph node, spleen and thymus (at protein level).

Its subcellular location is the cell membrane. Its function is as follows. Required for TCR (T-cell antigen receptor)- and pre-TCR-mediated signaling, both in mature T-cells and during their development. Involved in FCGR3 (low affinity immunoglobulin gamma Fc region receptor III)-mediated signaling in natural killer cells and FCER1 (high affinity immunoglobulin epsilon receptor)-mediated signaling in mast cells. Couples activation of these receptors and their associated kinases with distal intracellular events such as mobilization of intracellular calcium stores, PKC activation, MAPK activation or cytoskeletal reorganization through the recruitment of PLCG1, GRB2, GRAP2, and other signaling molecules. This Rattus norvegicus (Rat) protein is Linker for activation of T-cells family member 1 (Lat).